A 785-amino-acid chain; its full sequence is 1-phosphatidylinositol 4,5-bisphosphate phosphodiesterase delta-3 (785 aa).

Residues Met1–Gly43 are disordered. One can recognise a PH domain in the interval Ser65–Ala168. The substrate binding stretch occupies residues Lys69 to Pro97. At Ser101 the chain carries Phosphoserine. EF-hand domains are found at residues Arg178–Asp213, Met214–Arg249, and Leu246–Asp281. Asp191, Asp193, Asp195, Lys197, Glu202, Asp227, Ser229, Asn231, Arg233, and Glu238 together coordinate Ca(2+). A PI-PLC X-box domain is found at Gln333–Lys478. Residue His348 is part of the active site. Asn349, Glu378, and Asp380 together coordinate Ca(2+). His393 is an active-site residue. Glu427 contacts Ca(2+). Substrate is bound by residues Lys476 and Lys478. A compositionally biased stretch (basic and acidic residues) spans Arg484 to Asp493. Residues Arg484 to Ala517 form a disordered region. At Ser492 the chain carries Phosphoserine. Positions Arg494–Glu509 are enriched in acidic residues. The PI-PLC Y-box domain occupies Leu524–Arg640. Residue Ser553 participates in substrate binding. Ser569 is subject to Phosphoserine. A substrate-binding site is contributed by Arg580. One can recognise a C2 domain in the interval Pro636–Ser765. Residues Ile679, Asp681, Asn705, Asp734, Tyr735, and Asp736 each coordinate Ca(2+).

Ca(2+) is required as a cofactor. In terms of tissue distribution, expressed in cerebellum and cerebral cortex.

It localises to the membrane. It is found in the cytoplasm. The protein resides in the cleavage furrow. It carries out the reaction a 1,2-diacyl-sn-glycero-3-phospho-(1D-myo-inositol-4,5-bisphosphate) + H2O = 1D-myo-inositol 1,4,5-trisphosphate + a 1,2-diacyl-sn-glycerol + H(+). Its activity is regulated as follows. Strongly activated by phosphatidic acid. Inhibited by phosphatidylethanolamine (PtdEtn), phosphatidylcholine (PtdCho), sphingomyelin and phosphatidylserine (PtdSer). Hydrolyzes the phosphatidylinositol 4,5-bisphosphate (PIP2) to generate 2 second messenger molecules diacylglycerol (DAG) and inositol 1,4,5-trisphosphate (IP3). DAG mediates the activation of protein kinase C (PKC), while IP3 releases Ca(2+) from intracellular stores. Essential for trophoblast and placental development. May participate in cytokinesis by hydrolyzing PIP2 at the cleavage furrow. Regulates neurite outgrowth through the inhibition of RhoA/Rho kinase signaling. This chain is 1-phosphatidylinositol 4,5-bisphosphate phosphodiesterase delta-3, found in Mus musculus (Mouse).